The following is a 25-amino-acid chain: Brevinin-2R (25 aa).

Cys19 and Cys25 are disulfide-bonded.

Belongs to the frog skin active peptide (FSAP) family. Brevinin subfamily. In terms of tissue distribution, expressed by the skin glands.

It localises to the secreted. Its function is as follows. Cytotoxic to cancer cells, acts via the activation of the lysosomal-mitochondrial death pathway and autophagy-like cell death. Does not show significant hemolytic activity. This chain is Brevinin-2R, found in Pelophylax ridibundus (Marsh frog).